Consider the following 555-residue polypeptide: 2-succinyl-5-enolpyruvyl-6-hydroxy-3-cyclohexene-1-carboxylate synthase (555 aa).

The protein belongs to the TPP enzyme family. MenD subfamily. As to quaternary structure, homodimer. The cofactor is Mg(2+). Mn(2+) is required as a cofactor. Thiamine diphosphate serves as cofactor.

It catalyses the reaction isochorismate + 2-oxoglutarate + H(+) = 5-enolpyruvoyl-6-hydroxy-2-succinyl-cyclohex-3-ene-1-carboxylate + CO2. The protein operates within quinol/quinone metabolism; 1,4-dihydroxy-2-naphthoate biosynthesis; 1,4-dihydroxy-2-naphthoate from chorismate: step 2/7. Its pathway is quinol/quinone metabolism; menaquinone biosynthesis. Its function is as follows. Catalyzes the thiamine diphosphate-dependent decarboxylation of 2-oxoglutarate and the subsequent addition of the resulting succinic semialdehyde-thiamine pyrophosphate anion to isochorismate to yield 2-succinyl-5-enolpyruvyl-6-hydroxy-3-cyclohexene-1-carboxylate (SEPHCHC). This is 2-succinyl-5-enolpyruvyl-6-hydroxy-3-cyclohexene-1-carboxylate synthase from Bacteroides thetaiotaomicron (strain ATCC 29148 / DSM 2079 / JCM 5827 / CCUG 10774 / NCTC 10582 / VPI-5482 / E50).